The chain runs to 188 residues: MTTIAKQDKIFMKRSGAYHSELDKDIVQKAGNFPLMQFKTKVKVNPKFLLKGDDMDIVDEAITYYKANVFYKNFDMSICEADKLLVYLIFYIQSLLLKFNGRTKVECDKMAYSLAIENFALPGDGKFCLGGIVEPLKASEKEVVRQYMTAIRNETGLRLTQAVFKNDPTKCDKWWMCFNKRKFLNKTI.

It belongs to the ARPC3 family. As to quaternary structure, component of the Arp2/3 complex.

It localises to the cytoplasm. It is found in the cytoskeleton. In terms of biological role, functions as a component of the Arp2/3 complex which is involved in regulation of actin polymerization and together with an activating nucleation-promoting factor (NPF) mediates the formation of branched actin networks. The chain is Actin-related protein 2/3 complex subunit 3 from Entamoeba histolytica (strain ATCC 30459 / HM-1:IMSS / ABRM).